A 316-amino-acid polypeptide reads, in one-letter code: Beta-ketoacyl-[acyl-carrier-protein] synthase III (316 aa).

Residues Cys-112 and His-243 contribute to the active site. The interval 244 to 248 is ACP-binding; that stretch reads QANLR. Asn-273 is an active-site residue.

The protein belongs to the thiolase-like superfamily. FabH family. Homodimer.

Its subcellular location is the cytoplasm. It carries out the reaction malonyl-[ACP] + acetyl-CoA + H(+) = 3-oxobutanoyl-[ACP] + CO2 + CoA. The protein operates within lipid metabolism; fatty acid biosynthesis. Functionally, catalyzes the condensation reaction of fatty acid synthesis by the addition to an acyl acceptor of two carbons from malonyl-ACP. Catalyzes the first condensation reaction which initiates fatty acid synthesis and may therefore play a role in governing the total rate of fatty acid production. Possesses both acetoacetyl-ACP synthase and acetyl transacylase activities. Its substrate specificity determines the biosynthesis of branched-chain and/or straight-chain of fatty acids. The chain is Beta-ketoacyl-[acyl-carrier-protein] synthase III from Histophilus somni (strain 129Pt) (Haemophilus somnus).